A 305-amino-acid polypeptide reads, in one-letter code: HPr kinase/phosphorylase (305 aa).

Catalysis depends on residues His-138 and Lys-159. An ATP-binding site is contributed by 153 to 160 (GESGIGKS). Ser-160 is a Mg(2+) binding site. Asp-177 acts as the Proton acceptor; for phosphorylation activity. Proton donor; for dephosphorylation activity in catalysis. Positions 201-210 (IEIRGIGILD) are important for the catalytic mechanism of both phosphorylation and dephosphorylation. Glu-202 provides a ligand contact to Mg(2+). Residue Arg-243 is part of the active site. The interval 264-269 (PVRPGR) is important for the catalytic mechanism of dephosphorylation.

Belongs to the HPrK/P family. As to quaternary structure, homohexamer. Mg(2+) serves as cofactor.

It carries out the reaction [HPr protein]-L-serine + ATP = [HPr protein]-O-phospho-L-serine + ADP + H(+). It catalyses the reaction [HPr protein]-O-phospho-L-serine + phosphate + H(+) = [HPr protein]-L-serine + diphosphate. Its function is as follows. Catalyzes the ATP- as well as the pyrophosphate-dependent phosphorylation of a specific serine residue in HPr, a phosphocarrier protein of the phosphoenolpyruvate-dependent sugar phosphotransferase system (PTS). HprK/P also catalyzes the pyrophosphate-producing, inorganic phosphate-dependent dephosphorylation (phosphorolysis) of seryl-phosphorylated HPr (P-Ser-HPr). The two antagonistic activities of HprK/P are regulated by several intracellular metabolites, which change their concentration in response to the absence or presence of rapidly metabolisable carbon sources (glucose, fructose, etc.) in the growth medium. Therefore, by controlling the phosphorylation state of HPr, HPrK/P is a sensor enzyme that plays a major role in the regulation of carbon metabolism and sugar transport: it mediates carbon catabolite repression (CCR), and regulates PTS-catalyzed carbohydrate uptake and inducer exclusion. This is HPr kinase/phosphorylase from Caldanaerobacter subterraneus subsp. tengcongensis (strain DSM 15242 / JCM 11007 / NBRC 100824 / MB4) (Thermoanaerobacter tengcongensis).